The following is a 388-amino-acid chain: Acetate kinase (388 aa).

Residue Asn-7 participates in Mg(2+) binding. Lys-14 lines the ATP pocket. Position 76 (Arg-76) interacts with substrate. Asp-133 acts as the Proton donor/acceptor in catalysis. Residues 193 to 197 (HLGNG), 267 to 269 (DMR), and 315 to 319 (GIGEN) contribute to the ATP site. Glu-374 is a binding site for Mg(2+).

It belongs to the acetokinase family. As to quaternary structure, homodimer. Mg(2+) serves as cofactor. Requires Mn(2+) as cofactor.

Its subcellular location is the cytoplasm. It catalyses the reaction acetate + ATP = acetyl phosphate + ADP. Its pathway is metabolic intermediate biosynthesis; acetyl-CoA biosynthesis; acetyl-CoA from acetate: step 1/2. Its function is as follows. Catalyzes the formation of acetyl phosphate from acetate and ATP. Can also catalyze the reverse reaction. The polypeptide is Acetate kinase (Micrococcus luteus (strain ATCC 4698 / DSM 20030 / JCM 1464 / CCM 169 / CCUG 5858 / IAM 1056 / NBRC 3333 / NCIMB 9278 / NCTC 2665 / VKM Ac-2230) (Micrococcus lysodeikticus)).